The chain runs to 547 residues: Chaperonin GroEL (547 aa).

ATP is bound by residues 29 to 32 (TLGP), 86 to 90 (DGTTT), Gly-413, 478 to 480 (DVL), and Asp-494.

The protein belongs to the chaperonin (HSP60) family. As to quaternary structure, forms a cylinder of 14 subunits composed of two heptameric rings stacked back-to-back. Interacts with the co-chaperonin GroES.

It is found in the cytoplasm. The enzyme catalyses ATP + H2O + a folded polypeptide = ADP + phosphate + an unfolded polypeptide.. Together with its co-chaperonin GroES, plays an essential role in assisting protein folding. The GroEL-GroES system forms a nano-cage that allows encapsulation of the non-native substrate proteins and provides a physical environment optimized to promote and accelerate protein folding. The sequence is that of Chaperonin GroEL from Alkaliphilus metalliredigens (strain QYMF).